Consider the following 258-residue polypeptide: tRNA pseudouridine synthase A (258 aa).

The Nucleophile role is filled by Asp52. Position 110 (Tyr110) interacts with substrate.

This sequence belongs to the tRNA pseudouridine synthase TruA family. In terms of assembly, homodimer.

It carries out the reaction uridine(38/39/40) in tRNA = pseudouridine(38/39/40) in tRNA. Functionally, formation of pseudouridine at positions 38, 39 and 40 in the anticodon stem and loop of transfer RNAs. This chain is tRNA pseudouridine synthase A, found in Francisella tularensis subsp. tularensis (strain FSC 198).